We begin with the raw amino-acid sequence, 192 residues long: Ribosome maturation factor RimP (192 aa).

Belongs to the RimP family.

The protein localises to the cytoplasm. In terms of biological role, required for maturation of 30S ribosomal subunits. This chain is Ribosome maturation factor RimP, found in Mycobacterium sp. (strain JLS).